The primary structure comprises 78 residues: Large ribosomal subunit protein bL28 (78 aa).

Positions 1-25 are disordered; that stretch reads MSRVCQVTGKRPTVGNNRSHARNAT.

It belongs to the bacterial ribosomal protein bL28 family.

The chain is Large ribosomal subunit protein bL28 from Alteromonas mediterranea (strain DSM 17117 / CIP 110805 / LMG 28347 / Deep ecotype).